Reading from the N-terminus, the 272-residue chain is MSLQFLRSEASDGAGETSDASSADFLLDPQTATHLARLTGRPCNRLIYRTALTHRSVLHDHHSEEHKPESNQRLEFLGDAVLDLLISEHLFKQFPGSDEGHLSSNRAKIVNRKSLAAFALELQLGEHLIIGESADKQKIRTSESALADALEALVGAIYLDQGLAGAERFITNHVIAKVDLHKLVEAEYNYKSRLIEYTQSRQLPPPLYTVITEEGAEHEKTFVVEVSCNGQPLGRGTAPRKKDAEQLAAKEAMKRLESGDLGNLNEPSPQNS.

The interval 1-22 (MSLQFLRSEASDGAGETSDASS) is disordered. One can recognise an RNase III domain in the interval 31-162 (TATHLARLTG…LVGAIYLDQG (132 aa)). Glu-75 contacts Mg(2+). Residue Asp-79 is part of the active site. 2 residues coordinate Mg(2+): Asp-148 and Glu-151. Residue Glu-151 is part of the active site. The DRBM domain maps to 189 to 258 (NYKSRLIEYT…AKEAMKRLES (70 aa)).

Belongs to the ribonuclease III family. As to quaternary structure, homodimer. It depends on Mg(2+) as a cofactor.

It is found in the cytoplasm. It carries out the reaction Endonucleolytic cleavage to 5'-phosphomonoester.. Its function is as follows. Digests double-stranded RNA. Involved in the processing of primary rRNA transcript to yield the immediate precursors to the large and small rRNAs (23S and 16S). Processes some mRNAs, and tRNAs when they are encoded in the rRNA operon. Processes pre-crRNA and tracrRNA of type II CRISPR loci if present in the organism. The chain is Ribonuclease 3 from Chlorobaculum tepidum (strain ATCC 49652 / DSM 12025 / NBRC 103806 / TLS) (Chlorobium tepidum).